The following is a 472-amino-acid chain: MGCTVSTQTIGDESDPFLQNKRANDVIEQSLQLEKQRDKNEIKLLLLGAGESGKSTVLKQLKLLHQGGFSHQERLQYAQVIWADAIQSMKILIIQARKLGIQLDCDDPINNKDLFACKRILLKAKALDYINASVAGGSDFLNDYVLKYSERYETRRRVQSTGRAKAAFDEDGNISNVKSDTDRDAETVTQNEDADRNNSSRINLQDICKDLNQEGDDQMFVRKTSREIQGQNRRNLIHEDIAKAIKQLWNNDKGIKQCFARSNEFQLEGSAAYYFDNIEKFASPNYVCTDEDILKGRIKTTGITETEFNIGSSKFKVLDAGGQRSERKKWIHCFEGITAVLFVLAMSEYDQMLFEDERVNRMHESIMLFDTLLNSKWFKDTPFILFLNKIDLFEEKVKSMPIRKYFPDYQGRVGDAEAGLKYFEKIFLSLNKTNKPIYVKRTCATDTQTMKFVLSAVTDLIIQQNLKKIGII.

The N-myristoyl glycine moiety is linked to residue glycine 2. The S-palmitoyl cysteine moiety is linked to residue cysteine 3. The G-alpha domain maps to 40–472 (NEIKLLLLGA…QQNLKKIGII (433 aa)). The tract at residues 43-56 (KLLLLGAGESGKST) is G1 motif. The GTP site is built by glutamate 51, serine 52, glycine 53, lysine 54, serine 55, and threonine 56. Serine 55 lines the Mg(2+) pocket. The tract at residues 127–235 (LDYINASVAG…REIQGQNRRN (109 aa)) is insert; not present in other G-proteins. Positions 162–199 (GRAKAAFDEDGNISNVKSDTDRDAETVTQNEDADRNNS) are disordered. Lysine 165 participates in a covalent cross-link: Glycyl lysine isopeptide (Lys-Gly) (interchain with G-Cter in ubiquitin). Residues 292 to 300 (DILKGRIKT) form a G2 motif region. The GTP site is built by leucine 294, threonine 300, glycine 322, asparagine 388, lysine 389, aspartate 391, and alanine 444. Threonine 300 contacts Mg(2+). Residues 315 to 324 (FKVLDAGGQR) form a G3 motif region. Residues 384–391 (ILFLNKID) form a G4 motif region. The segment at 442 to 447 (TCATDT) is G5 motif.

It belongs to the G-alpha family. G(q) subfamily. As to quaternary structure, g proteins are composed of 3 units; alpha, beta and gamma. The alpha chain contains the guanine nucleotide binding site. In its GDP-bound form, binds to the G protein beta-gamma dimer STE4-STE18. Directly interacts with the beta subunit STE4. Probably forms preactivation complexes with unligated receptors STE2 and STE3. Interacts with FUS3. Pheromone-induced activation of GPA1 increases its association with FUS3. Interacts with SCP160. SCP160 binds specifically to the GTP-bound form of GPA1. Interacts with the phosphatidylinositol 3-kinase (PI3K) subunits VPS15 and VPS34 at the endosome. The GTP-bound form of GPA1 binds directly and selectively to the catalytic subunit VPS34, while the GDP-bound form binds to VPS15, which appears to function as an alternative G protein beta subunit for GPA1. Interacts with regulators of G protein signaling (RGS) proteins MDM1, RAX1, RGS2 and SST2, but SST2 alone binds preferentially to the transition state conformation of GPA1, indicating that it acts as a GAP for this G protein. Mg(2+) serves as cofactor. In terms of processing, N-myristoylation by NMT1 is pheromone-stimulated and required for palmitoylation of Cys-3. This lipid modification anchors the protein to membranes. Depalmitoylated by YLR118C/APT1. Post-translationally, monoubiquitination targets the protein for degradation to the vacuole, and polyubiquitination tags the protein for degradation by the proteasome. This may be an additional signaling regulation mechanism.

The protein localises to the cell membrane. It is found in the endosome membrane. With respect to regulation, alternates between an inactive form bound to GDP and an active form bound to GTP. Activated by the G protein coupled receptors (GPCRs) STE2 and STE3, which serve as guanine nucleotide-exchange factors (GEFs), and inactivated by SST2, probably acting as a GTPase-activating protein (GAP). In terms of biological role, alpha subunit of the heterotrimeric guanine nucleotide-binding protein (G protein) that mediates mating pheromone signal transduction. Binding of alpha-factor or a-factor to its cognate transmembrane receptor STE2 and STE3, respectively, allows the receptor to serve as a guanine nucleotide exchange factor (GEF) on GPA1. The exchange of GDP for GTP on the G protein alpha subunit alters its interaction with the G protein beta subunit STE4, leading to dissociation of the G protein beta-gamma dimer STE4-STE18. The dissociated subunits activate downstream effectors to activate the mating response pathway and induce changes necessary to produce mating-competent cells. STE4-STE18 activate the downstream pheromone signaling MAP kinase cascade leading to expression of mating-specific genes, inducing cell cycle arrest in G1, promoting polarized cell growth to form mating projections (shmoos), and establishing the changes in plasma membrane, cell wall and nuclear envelope to permit cell-cell fusion (plasmogamy) and fusion of the two haploid nuclei (karyogamy). GPA1 transmits a signal that requires direct binding to the effector enzyme PI3K located at the endosome, promoting increased PI3 production. The intrinsic GTPase activity of GPA1 determines the duration of signaling, and is dramatically accelerated by the RGS protein SST2. In unstimulated cells, GDP-bound GPA1 sequesters the G protein beta-gamma subunit STE4-STE18, preventing it from activating the downstream effectors. Also down-regulates the signal by inhibiting the pheromone-induced accumulation of FUS3 in the nucleus. In Saccharomyces cerevisiae (strain ATCC 204508 / S288c) (Baker's yeast), this protein is Guanine nucleotide-binding protein alpha-1 subunit (GPA1).